Consider the following 1008-residue polypeptide: G protein-regulated inducer of neurite outgrowth 1 (1008 aa).

The interval 1-859 (MDTAEDPAWL…SPPSRRDAGL (859 aa)) is disordered. The residue at position 60 (T60) is a Phosphothreonine. S64 and S75 each carry phosphoserine. The segment covering 117 to 127 (ISGTPEATTSG) has biased composition (polar residues). 4 stretches are compositionally biased toward basic and acidic residues: residues 137–159 (TEPK…KSSK), 167–178 (GKEDPGSSRKAD), 230–269 (PRKE…HPVS), and 279–291 (EKVD…KRDP). Residue S237 is modified to Phosphoserine. Polar residues-rich tracts occupy residues 326-336 (SGKNGPVSSGT) and 391-406 (HTDT…TSLK). Phosphoserine occurs at positions 436 and 452. The span at 454-466 (GKEDPVSSRREDP) shows a compositional bias: basic and acidic residues. Residues 481 to 491 (PESSGKTNPVS) show a composition bias toward polar residues. Over residues 549–559 (GKEDPVSKGKA) the composition is skewed to basic and acidic residues. S615 is subject to Phosphoserine. Over residues 643-656 (PGQEGAAAPGEAGA) the composition is skewed to low complexity. A compositionally biased stretch (basic and acidic residues) spans 659–679 (LKKETPQASEKVDPGSCRKAE). Residue S737 is modified to Phosphoserine. Residues 742-752 (RGSEGRVEPKA) are compositionally biased toward basic and acidic residues. A compositionally biased stretch (polar residues) spans 755 to 764 (VSSTEASSLG). S799 carries the post-translational modification Phosphoserine. Low complexity predominate over residues 838-847 (SAFSFQAAPR). Phosphothreonine is present on T877. Phosphoserine occurs at positions 895 and 914. The tract at residues 899 to 1008 (AAVAPPEPAE…CCSRAGPTAE (110 aa)) is interaction with GNAO1. A disordered region spans residues 943–986 (ERQIEEHGRQGAPAPPPAARAGPGRSGSVRTAPPDGAAKRPPGL). S993 is modified (phosphoserine). S-palmitoyl cysteine attachment occurs at residues C999 and C1000.

Interacts with activated forms of GNAI1, GNAO1 and GNAZ. Post-translationally, palmitoylation on Cys-999 and/or Cys-1000 is required for membrane targeting. As to expression, widely expressed in the central nervous system, with highest levels in spinal cord.

Its subcellular location is the cell membrane. It is found in the cell projection. The protein localises to the growth cone. In terms of biological role, may be involved in neurite outgrowth. This Homo sapiens (Human) protein is G protein-regulated inducer of neurite outgrowth 1 (GPRIN1).